The primary structure comprises 549 residues: Putative acyl-CoA synthetase YngI (549 aa).

ATP contacts are provided by residues 198–206, D423, R438, and K529; that span reads TSGTTGFPK.

It belongs to the ATP-dependent AMP-binding enzyme family.

The polypeptide is Putative acyl-CoA synthetase YngI (yngI) (Bacillus subtilis (strain 168)).